Here is a 503-residue protein sequence, read N- to C-terminus: Cytochrome P450 monooxygenase lnbC (503 aa).

The helical transmembrane segment at valine 14–valine 34 threads the bilayer. 2 N-linked (GlcNAc...) asparagine glycosylation sites follow: asparagine 94 and asparagine 169. Residue cysteine 446 coordinates heme.

It belongs to the cytochrome P450 family. It depends on heme as a cofactor.

It localises to the membrane. Its pathway is secondary metabolite biosynthesis. Its function is as follows. Cytochrome P450 monooxygenase; part of the lnb gene cluster that mediates the biosynthesis of diastereomeric piperazines. Lna and lnb clusters encode sets of enzymes that produce overlapping sets of previously undescribed metabolites such as piperazinomycin-like metabolites or morpholine. The lna and lnb biosynthetic pathways appear to be part of a signaling network that controls the formation of sclerotia, a resilient overwintering structure. One primary function of the non-canonical nonribosomal peptide synthetases lnaA and lnbA consists in the reduction of L-tyrosine. The presence in the clusters of tailoring enzymes such as the oxidoreductases lnaB, lnbB, lnaE or lnbE, as well as of the cytochrome P450 monooxygenases lnaC, lnaD, or lnbC, might explain formation of various diastereomeric piperazines. This chain is Cytochrome P450 monooxygenase lnbC, found in Aspergillus flavus (strain ATCC 200026 / FGSC A1120 / IAM 13836 / NRRL 3357 / JCM 12722 / SRRC 167).